The chain runs to 1503 residues: Lysine-specific demethylase 5B-B (1503 aa).

A JmjN domain is found at 15–56; that stretch reads CPVFEPSWEEFKDPFAFINKIRPIAEKTGICKVRPPPDWQPP. The ARID domain maps to 80–170; sequence TRVKLNFLDQ…ILYPYNLFQS (91 aa). Residues 202-211 are compositionally biased toward polar residues; the sequence is VPLQPSNTSA. Disordered stretches follow at residues 202–223 and 268–287; these read VPLQPSNTSAPARRAKRMKTES and IKELNPEPEKSKPKKKNIPP. A compositionally biased stretch (basic and acidic residues) spans 268–278; sequence IKELNPEPEKS. The PHD-type 1 zinc-finger motif lies at 295–345; it reads LYVCLVCGKGNDEDRLLLCDGCDDSYHTFCLIPPLTDVPKGDWRCPKCLTQ. The JmjC domain occupies 439 to 605; the sequence is KYLQCGWNLN…LGRQCVDHYR (167 aa). Fe cation is bound by residues His-485, Asp-488, and His-573. The PHD-type 2 zinc-finger motif lies at 1168–1216; that stretch reads LKVCVCQKPAMGAMLQCELCRDAFHSVCVRGPSDPLDPEAWLCPLCLRS. Disordered stretches follow at residues 1362 to 1381 and 1403 to 1442; these read TNTSHAEHKSYLTPPQTETD and ERGTKLKSKKQRMMGVEKRRERKAASVSASDMSQSEDSEE. A PHD-type 3 zinc finger spans residues 1444–1497; it reads MTLCPAESCLQPEGEEVDWVQCDCCNRWFHMICVGVSAELAAEEDYMCVSCSTS.

This sequence belongs to the JARID1 histone demethylase family. It depends on Fe(2+) as a cofactor.

It localises to the nucleus. The catalysed reaction is N(6),N(6),N(6)-trimethyl-L-lysyl(4)-[histone H3] + 3 2-oxoglutarate + 3 O2 = L-lysyl(4)-[histone H3] + 3 formaldehyde + 3 succinate + 3 CO2. Functionally, histone demethylase that demethylates 'Lys-4' of histone H3, thereby playing a central role in histone code. Does not demethylate histone H3 'Lys-9' or H3 'Lys-27'. Demethylates trimethylated, dimethylated and monomethylated H3 'Lys-4'. Acts as a transcriptional corepressor. In Danio rerio (Zebrafish), this protein is Lysine-specific demethylase 5B-B (kdm5bb).